The following is an 88-amino-acid chain: Small ribosomal subunit protein bS20 (88 aa).

The protein belongs to the bacterial ribosomal protein bS20 family.

Functionally, binds directly to 16S ribosomal RNA. The chain is Small ribosomal subunit protein bS20 from Bradyrhizobium diazoefficiens (strain JCM 10833 / BCRC 13528 / IAM 13628 / NBRC 14792 / USDA 110).